Consider the following 88-residue polypeptide: Large ribosomal subunit protein eL20 (88 aa).

The protein belongs to the eukaryotic ribosomal protein eL20 family. In terms of assembly, part of the 50S ribosomal subunit. Binds 23S rRNA.

The polypeptide is Large ribosomal subunit protein eL20 (Aeropyrum pernix (strain ATCC 700893 / DSM 11879 / JCM 9820 / NBRC 100138 / K1)).